The sequence spans 499 residues: FAD-dependent oxidoreductase domain-containing protein 1 (499 aa).

Residues 75–95 traverse the membrane as a helical segment; it reads ERADVVIVGGGVMGWSIAYWL.

FAD is required as a cofactor.

The protein localises to the mitochondrion inner membrane. Functionally, required for the assembly of the mitochondrial membrane respiratory chain NADH dehydrogenase (Complex I). Involved in mid-late stages of complex I assembly. This is FAD-dependent oxidoreductase domain-containing protein 1 (foxred1) from Xenopus laevis (African clawed frog).